The sequence spans 1134 residues: Nck-associated protein 1-like (1134 aa).

The segment at 638–671 (KAKNKKSMKQRQAPRKGEPERDKPGAESHRKNRS) is disordered. Over residues 639–651 (AKNKKSMKQRQAP) the composition is skewed to basic residues. A compositionally biased stretch (basic and acidic residues) spans 652-666 (RKGEPERDKPGAESH). Residues 999-1019 (LLLIFLAVSLPLLATDPSSFF) traverse the membrane as a helical segment.

In terms of assembly, in hematopoietic cells, component of the WAVE2 complex composed of ABI1, CYFIP1/SRA1, NCKAP1L/HEM1 and WASF2/WAVE2. Interacts with ARHGAP4, PIK3C3/VPS34 and PPP1R12A/MYPT1. Interacts with mammalian target of rapamycin complex 2 (mTORC2) components, including MTOR and RICTOR. In terms of tissue distribution, predominantly expressed in developing and mature hematopoietic cells. Also detected in urogenital tissues, including testis.

The protein resides in the membrane. It localises to the cytoplasm. Essential hematopoietic-specific regulator of the actin cytoskeleton. Controls lymphocyte development, activation, proliferation and homeostasis, erythrocyte membrane stability, as well as phagocytosis and migration by neutrophils and macrophages. Component of the WAVE2 complex which signals downstream of RAC to stimulate F-actin polymerization. Required for stabilization and/or translation of the WAVE2 complex proteins in hematopoietic cells. Within the WAVE2 complex, enables the cortical actin network to restrain excessive degranulation and granule release by T-cells. Required for efficient T-lymphocyte and neutrophil migration. Exhibits complex cycles of activation and inhibition to generate waves of propagating the assembly with actin. Also involved in mechanisms WAVE independent to regulate myosin and actin polymerization during neutrophil chemotaxis. In T-cells, required for proper mechanistic target of rapamycin complex 2 (mTORC2)-dependent AKT phosphorylation, cell proliferation and cytokine secretion, including that of IL2 and TNF. This Mus musculus (Mouse) protein is Nck-associated protein 1-like.